Consider the following 767-residue polypeptide: Cation/H(+) antiporter 27 (767 aa).

11 helical membrane-spanning segments follow: residues 39 to 59 (LPLLLLQISVFSIFSVSFQFL), 63 to 83 (FGKFAFLTQMLAGICLGPSVI), 99 to 119 (VYIIESFEAICFLFICYITTC), 135 to 155 (INGILLFLIPFVWGQFAAILI), 173 to 193 (HVAIVQSTMFFQVVYGVLSSL), 205 to 225 (LASMMVHDCLSWCFFMLNIAI), 242 to 262 (VLQMIMILVIAYVFRPLMLWM), 280 to 300 (ICVLLFISCLWAEFVGLPYFF), 323 to 343 (IGCFVWSVLMPCYVIGIGLNI), 371 to 391 (IALPSLYYKVPLWHAILVGFI), and 415 to 435 (KSFGAMVMSATVNSTIFIVIV).

It belongs to the monovalent cation:proton antiporter 2 (CPA2) transporter (TC 2.A.37) family. CHX (TC 2.A.37.4) subfamily. In terms of tissue distribution, specifically expressed in pollen.

The protein localises to the membrane. Its function is as follows. May operate as a cation/H(+) antiporter. The protein is Cation/H(+) antiporter 27 (CHX27) of Arabidopsis thaliana (Mouse-ear cress).